The chain runs to 607 residues: Heterocyst differentiation ATP-binding protein HepA (607 aa).

One can recognise an ABC transmembrane type-1 domain in the interval 32–330 (AILAVIFSFL…INGTVAFLST (299 aa)). Helical transmembrane passes span 33–53 (ILAV…IGFL), 77–97 (ILAA…LILL), 163–182 (FSGL…YFVV), 186–208 (ISWQ…LSTL), and 290–310 (IVIS…FFFV). Positions 364-598 (IDLVSVDFGY…RGKLWKYHQM (235 aa)) constitute an ABC transporter domain. Position 397–404 (397–404 (GASGAGKT)) interacts with ATP.

Belongs to the ABC transporter superfamily.

It localises to the cell inner membrane. Acts early in the process of morphological differentiation of heterocysts. The protein is Heterocyst differentiation ATP-binding protein HepA (hepA) of Nostoc sp. (strain PCC 7120 / SAG 25.82 / UTEX 2576).